The sequence spans 923 residues: SPX and EXS domain-containing protein 1 (923 aa).

One can recognise an SPX domain in the interval 1–326; it reads MKFGKKLRFE…PMNSSIKLDQ (326 aa). Composition is skewed to low complexity over residues 94–147 and 186–195; these read QEQS…QQQQ and TTTTTTTTTT. 2 disordered regions span residues 94 to 150 and 185 to 208; these read QEQS…QDLK and PTTTTTTTTTTMNTSAGSGIFKNK. A run of 9 helical transmembrane segments spans residues 382–402, 416–436, 471–491, 499–519, 529–551, 591–611, 620–640, 655–675, and 700–720; these read LKLGFAIGLSIGILAFVIILF, FVSTIPIFRAVGIPILAVWLW, ASFLTAIWLTMFLLFCGTVTG, PAQVYPLVLVIFFLSVVFFPF, LLFITLGNVIITPFGSTKFRALF, SIALPILSGLPLLWRFMQCIL, IHLGNSTKYAVGFSVVLFSAL, ILWCVCFVLSTLYMYCWDVVV, and WSYYYVLFSNLILRFAWTLTI. One can recognise an EXS domain in the interval 585–785; sequence RCNQVNSIAL…KNEVPKVESP (201 aa). The tract at residues 793–871 is disordered; it reads SSYPYRQDNF…NNSPSGSNSS (79 aa).

Belongs to the SYG1 (TC 2.A.94) family.

Its subcellular location is the membrane. The chain is SPX and EXS domain-containing protein 1 from Dictyostelium discoideum (Social amoeba).